A 401-amino-acid chain; its full sequence is MNGLDDENQIDERDHYTDDGDYEIDIDSMNMFKSLYYEMMAYFSDLQMHLGEHLMAIDWDMKCKSIAEPVGNCLTALFYIIRLLQDTLLSNYKDVYVSTEAFDLSKSTTLQEFPFLIRFVEVSKTKNLQNAKYIKKKTFMFYFDKLLLFLMILILSTNAYISWTFIWRNFKTYSLLYVVDRPNSKNVTKCSRTDLDQSYMENVSYGSYWTMLSYYIRNFRKKDDLEDEITTVKQKTPNVNEKDYYYQLKKWSPSKFLTSLFCSFSPTCLVFLILSDVSFTTSIAVILHQFIFKYVVFEGYESRINDESIIHSAMISEINQKFVEPRLSKKVQDAKIDATPEGKVYRTEFFPSLTNCKSNLFNRHDLKGRSITESYNDRIKEFEIVTNTNNETHNVIKVVKK.

2 consecutive transmembrane segments (helical) span residues 146 to 166 (LLLFLMILILSTNAYISWTFI) and 256 to 274 (FLTSLFCSFSPTCLVFLIL).

It belongs to the NUR1 family.

It localises to the nucleus membrane. Its function is as follows. Member of a perinuclear network that controls recombination at multiple loci to maintain genome stability. Required for rDNA repeat stability. This chain is Nuclear rim protein 1 (NUR1), found in Vanderwaltozyma polyspora (strain ATCC 22028 / DSM 70294 / BCRC 21397 / CBS 2163 / NBRC 10782 / NRRL Y-8283 / UCD 57-17) (Kluyveromyces polysporus).